Here is a 606-residue protein sequence, read N- to C-terminus: MCGIFGYLGQRNAVPLVLEGLSKLEYRGYDSAGIAALTKDHLFVEKSVGPVSQLCSKVSSDMHSQVAIGHTRWATHGEPSRFNAHPHVDMYESCALVHNGIIENFQTLREDLSSKGVEFSSDTDTEVIVQLFASRYRETGDLVQSFSWTLKQLQGSFACALVHQDHPEILLCATYESPLILGLGEEEVFISSDVHAFLKYSCQIQTLASGELAVLRIGRPVEIYNFELSRIQKEVRCIDHAEGSLDKQGFDYYMLKEIYEQPEVFERILHFVCEENGFAESFLKEFSFEGIESLHIVACGSSYHAGCLAKYVIESMVSIPVYVETASEFRYRQPYIAKRSLAILISQSGETADTLAALNEFRKLDEVRVLGICNVRGSVLASRVDHCVFIEAGLEVGVASTKAFTAQLLVLILLGLKLASQRQEISKQDLMQAVQGLRELPRLTRLFLDSSIHDWRCRQSKETSFIFLGRRFMYPICMEAALKLKEIAYVEANAYPAGEMKHGPIALIQEGTPVIVYCGDPFVYTKTIGAIMEVKARKAYVIALARESNQDIAAVSDEQIYIPDSHDLAAPILFAIAGQIMAYTMALQKGTEVDRPRNLAKSVTVE.

Cysteine 2 acts as the Nucleophile; for GATase activity in catalysis. The Glutamine amidotransferase type-2 domain maps to 2-218 (CGIFGYLGQR…SGELAVLRIG (217 aa)). SIS domains are found at residues 278 to 424 (FAES…QRQE) and 455 to 596 (WRCR…VDRP). Catalysis depends on lysine 601, which acts as the For Fru-6P isomerization activity.

In terms of assembly, homodimer.

It is found in the cytoplasm. The enzyme catalyses D-fructose 6-phosphate + L-glutamine = D-glucosamine 6-phosphate + L-glutamate. Functionally, catalyzes the first step in hexosamine metabolism, converting fructose-6P into glucosamine-6P using glutamine as a nitrogen source. The protein is Glutamine--fructose-6-phosphate aminotransferase [isomerizing] of Chlamydia muridarum (strain MoPn / Nigg).